The primary structure comprises 400 residues: CinA-like protein (400 aa).

This sequence belongs to the CinA family.

The sequence is that of CinA-like protein from Escherichia coli O9:H4 (strain HS).